The sequence spans 357 residues: mRNA endoribonuclease toxin LS (357 aa).

As to quaternary structure, forms homodimer in solution. Forms a complex with cognate antitoxin RnlB and with enterobacteria phage T4 antitoxin Dmd.

It is found in the cytoplasm. Toxic component of a type II toxin-antitoxin (TA) system. A stable (half-life 27.6 minutes) endoribonuclease that in the absence of cognate antitoxin RnlB causes generalized RNA degradation. Degrades late enterobacteria phage T4 mRNAs, protecting the host against T4 reproduction. Activity is inhibited by cognate antitoxin RnlB and by enterobacteria phage T4 protein Dmd. Targets cyaA mRNA. The protein is mRNA endoribonuclease toxin LS (rnlA) of Escherichia coli (strain K12).